Reading from the N-terminus, the 359-residue chain is Peptide chain release factor 1 (359 aa).

Gln235 bears the N5-methylglutamine mark. A disordered region spans residues 283-309; sequence QKAESERSQARRSQVGSGDRSERIRTY.

It belongs to the prokaryotic/mitochondrial release factor family. In terms of processing, methylated by PrmC. Methylation increases the termination efficiency of RF1.

It is found in the cytoplasm. Peptide chain release factor 1 directs the termination of translation in response to the peptide chain termination codons UAG and UAA. This Brucella abortus (strain S19) protein is Peptide chain release factor 1.